We begin with the raw amino-acid sequence, 499 residues long: Bifunctional purine biosynthesis protein PurH (499 aa).

The MGS-like domain occupies Met-1–Thr-144.

Belongs to the PurH family.

It catalyses the reaction (6R)-10-formyltetrahydrofolate + 5-amino-1-(5-phospho-beta-D-ribosyl)imidazole-4-carboxamide = 5-formamido-1-(5-phospho-D-ribosyl)imidazole-4-carboxamide + (6S)-5,6,7,8-tetrahydrofolate. The enzyme catalyses IMP + H2O = 5-formamido-1-(5-phospho-D-ribosyl)imidazole-4-carboxamide. It participates in purine metabolism; IMP biosynthesis via de novo pathway; 5-formamido-1-(5-phospho-D-ribosyl)imidazole-4-carboxamide from 5-amino-1-(5-phospho-D-ribosyl)imidazole-4-carboxamide (10-formyl THF route): step 1/1. It functions in the pathway purine metabolism; IMP biosynthesis via de novo pathway; IMP from 5-formamido-1-(5-phospho-D-ribosyl)imidazole-4-carboxamide: step 1/1. The chain is Bifunctional purine biosynthesis protein PurH from Clostridium acetobutylicum (strain ATCC 824 / DSM 792 / JCM 1419 / IAM 19013 / LMG 5710 / NBRC 13948 / NRRL B-527 / VKM B-1787 / 2291 / W).